The sequence spans 241 residues: MEAGMAEAGVKLEDSWKHVLSGEFASPYMQKLKEFLLAEKTAGKRIFPKGAEYFRALDLTPLDEVKVVILGQDPYHGLGQAHGLCFSVQPGVRIPPSLVNIYKELQSDLGIRPVKHGFLESWAKQGVLLLNSVLTVEEARAASHQGQGWEKFTDAVIRAVNDECDHVVFLLWGSYAQKKAAFVDQRKHLVLRSPHPSPLSAHNGFFGNGHFSKANAFLVSHGRDPIDWQLPDVVEGDKNLL.

The active-site Proton acceptor is D73.

Belongs to the uracil-DNA glycosylase (UDG) superfamily. UNG family.

It is found in the cytoplasm. The catalysed reaction is Hydrolyzes single-stranded DNA or mismatched double-stranded DNA and polynucleotides, releasing free uracil.. Its function is as follows. Excises uracil residues from the DNA which can arise as a result of misincorporation of dUMP residues by DNA polymerase or due to deamination of cytosine. This chain is Uracil-DNA glycosylase, found in Agrobacterium fabrum (strain C58 / ATCC 33970) (Agrobacterium tumefaciens (strain C58)).